Consider the following 331-residue polypeptide: Phosphate acyltransferase (331 aa).

This sequence belongs to the PlsX family. As to quaternary structure, homodimer. Probably interacts with PlsY.

It is found in the cytoplasm. It catalyses the reaction a fatty acyl-[ACP] + phosphate = an acyl phosphate + holo-[ACP]. It participates in lipid metabolism; phospholipid metabolism. Functionally, catalyzes the reversible formation of acyl-phosphate (acyl-PO(4)) from acyl-[acyl-carrier-protein] (acyl-ACP). This enzyme utilizes acyl-ACP as fatty acyl donor, but not acyl-CoA. The polypeptide is Phosphate acyltransferase (Mesoplasma florum (strain ATCC 33453 / NBRC 100688 / NCTC 11704 / L1) (Acholeplasma florum)).